The sequence spans 801 residues: Heavy metal tolerance factor 1 (801 aa).

Residues 1–24 (MGFSPFLDECRAEGLWPIGPSCNK) lie on the Lumenal side of the membrane. The helical transmembrane segment at 25–45 (IISFGVYTFFIVVNFIVLCIP) threads the bilayer. Over 46 to 75 (NSNSANNNYRRMTDDDASSTSKLTISKILS) the chain is Cytoplasmic. A helical transmembrane segment spans residues 76-96 (ICTIFAVICQSIFYFCFTFYF). Topologically, residues 97-101 (HPYTH) are lumenal. A helical membrane pass occupies residues 102-122 (LLLAFCVSKLFFWILSLCSFS). Topologically, residues 123-129 (KWRNQPS) are cytoplasmic. Residues 130–150 (TPISLAFAFSAALLIHCIPLT) traverse the membrane as a helical segment. Over 151 to 167 (DWKKYFEPTSKNRGDLT) the chain is Lumenal. A helical transmembrane segment spans residues 168-188 (FYIIELALVTVVFFFTIVTGL). Residues 189–226 (FNFSGCSSRESAWNNLSKKVVTVAPYIWPTKSISLQLR) lie on the Cytoplasmic side of the membrane. A helical membrane pass occupies residues 227-247 (VVFCLFLLIIGRLINVSLPIL). The region spanning 227–516 (VVFCLFLLII…FGTIYRVIQK (290 aa)) is the ABC transmembrane type-1 domain. The Lumenal segment spans residues 248-264 (SKWIVDELATPDTFQYS). A helical transmembrane segment spans residues 265–285 (LLFLATFLKFLQGNGAMGGFL). The Cytoplasmic segment spans residues 286–341 (NTVRTYLWIPIQQYTTRELEVELFKHLHSLSLRWHLSRKTGQVLRVMDRGTSSVNN). A helical membrane pass occupies residues 342–364 (ILNYILFNVVPTIADIVIAVIFF). The Lumenal segment spans residues 365-371 (FSAFNAY). Residues 372-390 (FGLIVFGTMALYLTVTISI) form a helical membrane-spanning segment. Residues 391–461 (TEWRTQYIRE…SLAFLNCLQN (71 aa)) are Cytoplasmic-facing. Residues 462–482 (AIIGIGMIGGSVFVVYMIVHE) traverse the membrane as a helical segment. Residues 483-489 (KTLTVGD) lie on the Lumenal side of the membrane. The chain crosses the membrane as a helical span at residues 490-510 (YVLFTTYLLQLYTPLNFFGTI). Over 511–801 (YRVIQKAFVD…KSIELGEELP (291 aa)) the chain is Cytoplasmic. The region spanning 550-784 (ISVKNLTFEY…QGTYASMWEA (235 aa)) is the ABC transporter domain. 583–590 (GSSGSGKS) is an ATP binding site.

Belongs to the ABC transporter superfamily. ABCB family. Heavy Metal importer (TC 3.A.1.210) subfamily. In terms of tissue distribution, expressed in coelomocytes, as well as in head and tail neurons, and in the intestinal cells.

It localises to the vacuole membrane. The protein resides in the early endosome. It is found in the late endosome. The protein localises to the recycling endosome. In terms of biological role, may play a pivotal role in the detoxification of heavy metals such as cadmium but do not depend exclusively on phytochelatins (PC) synthesis. The sequence is that of Heavy metal tolerance factor 1 from Caenorhabditis elegans.